The primary structure comprises 452 residues: UDP-N-acetylmuramoylalanine--D-glutamate ligase (452 aa).

An ATP-binding site is contributed by 119–125 (GSNGKTT).

It belongs to the MurCDEF family.

It is found in the cytoplasm. The enzyme catalyses UDP-N-acetyl-alpha-D-muramoyl-L-alanine + D-glutamate + ATP = UDP-N-acetyl-alpha-D-muramoyl-L-alanyl-D-glutamate + ADP + phosphate + H(+). Its pathway is cell wall biogenesis; peptidoglycan biosynthesis. Functionally, cell wall formation. Catalyzes the addition of glutamate to the nucleotide precursor UDP-N-acetylmuramoyl-L-alanine (UMA). This is UDP-N-acetylmuramoylalanine--D-glutamate ligase from Streptococcus pyogenes serotype M28 (strain MGAS6180).